Here is a 328-residue protein sequence, read N- to C-terminus: Carbonic anhydrase, chloroplastic (328 aa).

Positions 1–15 are enriched in low complexity; the sequence is MSTSSINGFSLSSLS. The disordered stretch occupies residues 1 to 26; sequence MSTSSINGFSLSSLSPAKTSTKRTTL. Residues 1–70 constitute a chloroplast transit peptide; the sequence is MSTSSINGFS…IITPVLREEM (70 aa).

It belongs to the beta-class carbonic anhydrase family. Homohexamer.

It localises to the plastid. It is found in the chloroplast stroma. It carries out the reaction hydrogencarbonate + H(+) = CO2 + H2O. In terms of biological role, reversible hydration of carbon dioxide. This is Carbonic anhydrase, chloroplastic from Pisum sativum (Garden pea).